The chain runs to 511 residues: Aldehyde dehydrogenase 2, mitochondrial (511 aa).

A mitochondrion-targeting transit peptide spans 1–21 (MSKSKTKTDKRNQSSLSRIKL). A disordered region spans residues 72–92 (VSEKSQHDSTEEDITQVSEKS). Position 274 to 279 (274 to 279 (GSTLVG)) interacts with NAD(+). Glu-297 serves as the catalytic Proton acceptor. The Nucleophile role is filled by Cys-331.

The protein belongs to the aldehyde dehydrogenase family.

It is found in the mitochondrion matrix. It carries out the reaction an aldehyde + NAD(+) + H2O = a carboxylate + NADH + 2 H(+). It participates in alcohol metabolism; ethanol degradation; acetate from ethanol: step 2/2. This is Aldehyde dehydrogenase 2, mitochondrial (ALD2) from Saccharomyces cerevisiae (Baker's yeast).